We begin with the raw amino-acid sequence, 277 residues long: Probable endonuclease 4 (277 aa).

Zn(2+) contacts are provided by His-67, His-107, Glu-142, Asp-176, His-179, His-211, Asp-224, His-226, and Glu-256.

This sequence belongs to the AP endonuclease 2 family. Zn(2+) is required as a cofactor.

It catalyses the reaction Endonucleolytic cleavage to 5'-phosphooligonucleotide end-products.. In terms of biological role, endonuclease IV plays a role in DNA repair. It cleaves phosphodiester bonds at apurinic or apyrimidinic (AP) sites, generating a 3'-hydroxyl group and a 5'-terminal sugar phosphate. In Clostridium botulinum (strain Alaska E43 / Type E3), this protein is Probable endonuclease 4.